The primary structure comprises 748 residues: Cytosolic phospholipase A2 (748 aa).

A phospholipid binding region spans residues M1 to S178. S2 bears the Phosphoserine mark. In terms of domain architecture, C2 spans P6 to F122. Residues D40, T41, D43, N65, D93, A94, and N95 each contribute to the Ca(2+) site. One can recognise a PLA2c domain in the interval V138–N739. Catalysis depends on S228, which acts as the Nucleophile. T268 carries the post-translational modification Phosphothreonine. Residues H428 to N458 are disordered. Phosphoserine is present on residues S434, S435, and S437. A compositionally biased stretch (basic and acidic residues) spans Q442–N458. Residue S505 is modified to Phosphoserine; by MAPK. S514 is subject to Phosphoserine. A Glycyl lysine isopeptide (Lys-Gly) (interchain with G-Cter in SUMO2) cross-link involves residue K540. The Proton acceptor role is filled by D548. Residue K605 forms a Glycyl lysine isopeptide (Lys-Gly) (interchain with G-Cter in SUMO2) linkage. Residues S726 and S728 each carry the phosphoserine modification.

As to quaternary structure, interacts with KAT5. In terms of processing, phosphorylated at both Ser-505 and Ser-726 in response to mitogenic stimuli.

Its subcellular location is the cytoplasm. The protein resides in the golgi apparatus membrane. It localises to the nucleus envelope. The enzyme catalyses a 1,2-diacyl-sn-glycero-3-phosphocholine + H2O = a 1-acyl-sn-glycero-3-phosphocholine + a fatty acid + H(+). It carries out the reaction a 1-O-alkyl-2-acyl-sn-glycero-3-phosphocholine + H2O = a 1-O-alkyl-sn-glycero-3-phosphocholine + a fatty acid + H(+). The catalysed reaction is a 1-acyl-sn-glycero-3-phosphocholine + H2O = sn-glycerol 3-phosphocholine + a fatty acid + H(+). It catalyses the reaction 1-hexadecanoyl-2-(5Z,8Z,11Z,14Z-eicosatetraenoyl)-sn-glycero-3-phosphocholine + H2O = 1-hexadecanoyl-sn-glycero-3-phosphocholine + (5Z,8Z,11Z,14Z)-eicosatetraenoate + H(+). The enzyme catalyses 1,2-di-(5Z,8Z,11Z,14Z-eicosatetraenoyl)-sn-glycero-3-phosphocholine + H2O = 1-(5Z,8Z,11Z,14Z-eicosatetraenoyl)-sn-glycero-3-phosphocholine + (5Z,8Z,11Z,14Z)-eicosatetraenoate + H(+). It carries out the reaction 1-octadecanoyl-2-(5Z,8Z,11Z,14Z-eicosatetraenoyl)-sn-glycero-3-phosphocholine + H2O = 1-octadecanoyl-sn-glycero-3-phosphocholine + (5Z,8Z,11Z,14Z)-eicosatetraenoate + H(+). The catalysed reaction is 1-hexadecanoyl-2-(9Z,12Z-octadecadienoyl)-sn-glycero-3-phosphocholine + H2O = (9Z,12Z)-octadecadienoate + 1-hexadecanoyl-sn-glycero-3-phosphocholine + H(+). It catalyses the reaction 1-octadecanoyl-2-(9Z,12Z,15Z-octadecatrienoyl)-sn-glycero-3-phosphocholine + H2O = (9Z,12Z,15Z)-octadecatrienoate + 1-octadecanoyl-sn-glycero-3-phosphocholine + H(+). The enzyme catalyses 1-(5Z,8Z,11Z,14Z-eicosatetraenoyl)-2-hexadecanoyl-sn-glycero-3-phosphocholine + H2O = 1-(5Z,8Z,11Z,14Z-eicosatetraenoyl)-sn-glycero-3-phosphocholine + hexadecanoate + H(+). It carries out the reaction 1-O-hexadecyl-2-(5Z,8Z,11Z,14Z)-eicosatetraenoyl-sn-glycero-3-phosphocholine + H2O = 1-O-hexadecyl-sn-glycero-3-phosphocholine + (5Z,8Z,11Z,14Z)-eicosatetraenoate + H(+). The catalysed reaction is 1,2-di-(9Z-octadecenoyl)-sn-glycero-3-phospho-(1'-sn-glycerol) + H2O = 1-(9Z-octadecenoyl)-sn-glycero-3-phospho-(1'-sn-glycerol) + (9Z)-octadecenoate + H(+). It catalyses the reaction 1-octadecanoyl-2-(5Z,8Z,11Z,14Z-eicosatetraenoyl)-sn-glycero-3-phosphate + H2O = 1-octadecanoyl-sn-glycero-3-phosphate + (5Z,8Z,11Z,14Z)-eicosatetraenoate + H(+). The enzyme catalyses 1-hexadecanoyl-sn-glycero-3-phosphocholine + H2O = sn-glycerol 3-phosphocholine + hexadecanoate + H(+). It carries out the reaction 2-(prostaglandin E2)-sn-glycero-3-phosphoethanolamine + H2O = sn-glycero-3-phosphoethanolamine + prostaglandin E2 + H(+). The catalysed reaction is 2-[(15S)-hydroxy-(5Z,8Z,11Z,13E)-eicosatetraenoyl]-sn-glycero-3-phosphocholine + H2O = (15S)-hydroxy-(5Z,8Z,11Z,13E)-eicosatetraenoate + sn-glycerol 3-phosphocholine + H(+). It catalyses the reaction 2-[(15R)-hydroxy-(5Z,8Z,11Z,13E)-eicosatetraenoyl]-sn-glycero-3-phosphocholine + H2O = (15R)-hydroxy-(5Z,8Z,11Z,13E)-eicosatetraenoate + sn-glycerol 3-phosphocholine + H(+). The enzyme catalyses 2-(prostaglandin E2)-sn-glycero-3-phosphocholine + H2O = prostaglandin E2 + sn-glycerol 3-phosphocholine + H(+). It carries out the reaction 2-[(11R)-hydroxy-(5Z,8Z,12E,14Z)-eicosatetraenoyl]-sn-glycero-3-phosphocholine + H2O = (11R)-hydroxy-(5Z,8Z,12E,14Z)-eicosatetraenoate + sn-glycerol 3-phosphocholine + H(+). The catalysed reaction is 1-(5Z,8Z,11Z,14Z-eicosatetraenoyl)-2-O-hexadecyl-sn-glycero-3-phosphocholine + H2O = 2-O-hexadecyl-sn-glycero-3-phosphocholine + (5Z,8Z,11Z,14Z)-eicosatetraenoate + H(+). It catalyses the reaction 1-octadecanoyl-2-(5Z,8Z,11Z,14Z-eicosatetraenoyl)-sn-glycero-3-phosphocholine + glycerol = 1-(5Z,8Z,11Z,14Z-eicosatetraenoyl)-glycerol + 1-octadecanoyl-sn-glycero-3-phosphocholine. The enzyme catalyses 1-octadecanoyl-2-(9Z,12Z,15Z-octadecatrienoyl)-sn-glycero-3-phosphocholine + glycerol = 1-(9Z,12Z,15Z-octadecatrienoyl)-glycerol + 1-octadecanoyl-sn-glycero-3-phosphocholine. Its pathway is membrane lipid metabolism; glycerophospholipid metabolism. It participates in lipid metabolism; arachidonate metabolism. The protein operates within lipid metabolism; prostaglandin biosynthesis. It functions in the pathway lipid metabolism; leukotriene B4 biosynthesis. With respect to regulation, activated by cytosolic calcium, which is necessary for binding to membrane lipids. Activated by phosphorylation in response to mitogenic stimuli. Has primarily calcium-dependent phospholipase and lysophospholipase activities, with a major role in membrane lipid remodeling and biosynthesis of lipid mediators of the inflammatory response. Plays an important role in embryo implantation and parturition through its ability to trigger prostanoid production. Preferentially hydrolyzes the ester bond of the fatty acyl group attached at sn-2 position of phospholipids (phospholipase A2 activity). Selectively hydrolyzes sn-2 arachidonoyl group from membrane phospholipids, providing the precursor for eicosanoid biosynthesis via the cyclooxygenase pathway. In an alternative pathway of eicosanoid biosynthesis, hydrolyzes sn-2 fatty acyl chain of eicosanoid lysophopholipids to release free bioactive eicosanoids. Hydrolyzes the ester bond of the fatty acyl group attached at sn-1 position of phospholipids (phospholipase A1 activity) only if an ether linkage rather than an ester linkage is present at the sn-2 position. This hydrolysis is not stereospecific. Has calcium-independent phospholipase A2 and lysophospholipase activities in the presence of phosphoinositides. Has O-acyltransferase activity. Catalyzes the transfer of fatty acyl chains from phospholipids to a primary hydroxyl group of glycerol (sn-1 or sn-3), potentially contributing to monoacylglycerol synthesis. This Oryctolagus cuniculus (Rabbit) protein is Cytosolic phospholipase A2 (PLA2G4A).